The chain runs to 249 residues: ATP synthase subunit a, chloroplastic (249 aa).

5 helical membrane passes run 40–60 (QVLI…VLAI), 97–117 (VPFI…GALL), 136–156 (INTT…AGLS), 201–221 (LVVV…VMFL), and 222–242 (GLFT…AYIG).

It belongs to the ATPase A chain family. F-type ATPases have 2 components, CF(1) - the catalytic core - and CF(0) - the membrane proton channel. CF(1) has five subunits: alpha(3), beta(3), gamma(1), delta(1), epsilon(1). CF(0) has four main subunits: a, b, b' and c.

The protein resides in the plastid. It localises to the chloroplast thylakoid membrane. Key component of the proton channel; it plays a direct role in the translocation of protons across the membrane. This Nasturtium officinale (Watercress) protein is ATP synthase subunit a, chloroplastic.